A 214-amino-acid polypeptide reads, in one-letter code: MSSKLFQNKLLLAGIGGFMVGGLASWVVSSDAYTAYHRLPASAKHISEISKSPEAVQMIDNIYRERQRSMKMEEHPSLLQSKYPSNFLSFKDGLIPVFKTFYDPEHEEWISIGLMGKALTGYQKLAHGGAIATLLIESLETVRNLRSSQANSQSTQPRDPIPTENFDVRTPSYSINYKKPVPAGDWVIVRVKDDVARLYNSKSQLLAEALDLQS.

The chain crosses the membrane as a helical span at residues 10 to 30 (LLLAGIGGFMVGGLASWVVSS). The span at 147 to 157 (SSQANSQSTQP) shows a compositional bias: polar residues. The segment at 147-166 (SSQANSQSTQPRDPIPTENF) is disordered.

It localises to the membrane. This is an uncharacterized protein from Schizosaccharomyces pombe (strain 972 / ATCC 24843) (Fission yeast).